The primary structure comprises 157 residues: Isotocin-neurophysin IT 1 (157 aa).

The signal sequence occupies residues 1–20 (MFGTSVSALCLLFLLSVCTA). The cysteines at positions 21 and 26 are disulfide-linked. The residue at position 29 (Gly-29) is a Glycine amide. Cystine bridges form between Cys-42–Cys-86, Cys-45–Cys-59, Cys-53–Cys-76, Cys-60–Cys-66, Cys-93–Cys-106, Cys-100–Cys-118, and Cys-107–Cys-112.

Belongs to the vasopressin/oxytocin family. Seven disulfide bonds are present in neurophysin.

The protein resides in the secreted. Isotocin causes contraction of smooth muscles. This chain is Isotocin-neurophysin IT 1, found in Oncorhynchus masou (Cherry salmon).